Consider the following 872-residue polypeptide: MLSMAKRVFWPYGYGSGRASFHKIVKNINAMEEGLSALSDSELFSKTSHFKELLASGQTLDDLLVPAFAVVRETARRVLNMRHFDVQLIGGIALHRCMIAEMKTGEGKTLVATLAAYLGALEGAGVHVVTVNDYLARRDSEWMGNIYQALGMSVGCITGSSSDEQRKAAYACDVLYSTNNELGFDYLRDNMKFGRESMVQRGFNYAIVDEVDSILIDEARTPLIISGPVERDSALYGRVDSLVRALTPEDYEVEEKNRSAFLTEEGAVKVEKMLLSMGLIPVGSSLYDTENIVMMHYVSQALRAHKLFAVDKDYIVKNGNVVIIDEFTGRMMEGRRYSDGLHQALEAKERLTVNSENQTLASTTFQNYFRMYRRISGMTGTAATEADEFLGTYNLQAMQIPTNVPVRRVDMDDDVYCTEEEKFEAVIDFIVECNKRLQPTLVGTISIEKSELLSEMLTKRGIKHSVLNARYHEKEAYIIAQAGRPGAVTIATNMAGRGTDIQLGGNPEMLAKDELSGITSDEERSAKYEQLVAQTKRDRDVVVAAGGLCIVGTERHESRRIDNQLRGRSGRQGDPGLSKFFLSLEDDLLRIFGSDKVKGMLKKLGMKRGEAIQHKWISKAIERAQKKVEARNYDIRKSLLRFDDVINEQRQVVFEQRNQVLDNDTYDFAFMYHSVNQDLVSRVVKDKYYDPSPETCEPLLSEVKRIYGVELEPEKLQNLETKEQVVGYLDSFAQELLEKKAAEFVHNGENLWDFAARRVLITSLDHMWIEHLSALDSLKCGINLRSIGQKDPLNEFKIEAFTMLKHMLLKFHEMVIQKLSSMRLERDASPATQHMFRAARGGDSPFSGISRNEKCPCGSGKKFKHCHGILQL.

ATP contacts are provided by residues glutamine 87, 105-109 (GEGKT), and aspartate 500. Zn(2+) is bound by residues cysteine 855, cysteine 857, cysteine 866, and histidine 867.

Belongs to the SecA family. Monomer and homodimer. Part of the essential Sec protein translocation apparatus which comprises SecA, SecYEG and auxiliary proteins SecDF-YajC and YidC. Zn(2+) serves as cofactor.

The protein localises to the cell inner membrane. It is found in the cytoplasm. The catalysed reaction is ATP + H2O + cellular proteinSide 1 = ADP + phosphate + cellular proteinSide 2.. In terms of biological role, part of the Sec protein translocase complex. Interacts with the SecYEG preprotein conducting channel. Has a central role in coupling the hydrolysis of ATP to the transfer of proteins into and across the cell membrane, serving both as a receptor for the preprotein-SecB complex and as an ATP-driven molecular motor driving the stepwise translocation of polypeptide chains across the membrane. The protein is Protein translocase subunit SecA of Anaplasma marginale (strain St. Maries).